The sequence spans 1141 residues: DNA-directed RNA polymerase subunit beta (1141 aa).

The protein belongs to the RNA polymerase beta chain family. As to quaternary structure, the RNAP catalytic core consists of 2 alpha, 1 beta, 1 beta' and 1 omega subunit. When a sigma factor is associated with the core the holoenzyme is formed, which can initiate transcription.

The enzyme catalyses RNA(n) + a ribonucleoside 5'-triphosphate = RNA(n+1) + diphosphate. In terms of biological role, DNA-dependent RNA polymerase catalyzes the transcription of DNA into RNA using the four ribonucleoside triphosphates as substrates. The chain is DNA-directed RNA polymerase subunit beta from Parafrankia sp. (strain EAN1pec).